Here is a 151-residue protein sequence, read N- to C-terminus: Superoxide dismutase [Cu-Zn] A (151 aa).

Residue Cys-6 is the site of S-palmitoyl cysteine attachment. Positions 45, 47, and 62 each coordinate Cu cation. Cysteines 56 and 144 form a disulfide. Positions 62, 70, 79, and 82 each coordinate Zn(2+). His-118 contacts Cu cation.

It belongs to the Cu-Zn superoxide dismutase family. As to quaternary structure, homodimer, and heterodimer of Superoxide dismutase [Cu-Zn] A and B. The cofactor is Cu cation. Zn(2+) is required as a cofactor.

Its subcellular location is the cytoplasm. It is found in the nucleus. The catalysed reaction is 2 superoxide + 2 H(+) = H2O2 + O2. Destroys radicals which are normally produced within the cells and which are toxic to biological systems. The protein is Superoxide dismutase [Cu-Zn] A (sod1-a) of Xenopus laevis (African clawed frog).